A 367-amino-acid chain; its full sequence is Phosphoribosylaminoimidazole-succinocarboxamide synthase (367 aa).

This sequence belongs to the SAICAR synthetase family.

The catalysed reaction is 5-amino-1-(5-phospho-D-ribosyl)imidazole-4-carboxylate + L-aspartate + ATP = (2S)-2-[5-amino-1-(5-phospho-beta-D-ribosyl)imidazole-4-carboxamido]succinate + ADP + phosphate + 2 H(+). The protein operates within purine metabolism; IMP biosynthesis via de novo pathway; 5-amino-1-(5-phospho-D-ribosyl)imidazole-4-carboxamide from 5-amino-1-(5-phospho-D-ribosyl)imidazole-4-carboxylate: step 1/2. This is Phosphoribosylaminoimidazole-succinocarboxamide synthase from Vibrio campbellii (strain ATCC BAA-1116).